The primary structure comprises 475 residues: Ribulose bisphosphate carboxylase large chain (475 aa).

Residues 1 to 2 (MS) constitute a propeptide that is removed on maturation. N-acetylproline is present on proline 3. The residue at position 14 (lysine 14) is an N6,N6,N6-trimethyllysine. 2 residues coordinate substrate: asparagine 123 and threonine 173. Catalysis depends on lysine 175, which acts as the Proton acceptor. Lysine 177 provides a ligand contact to substrate. Mg(2+) contacts are provided by lysine 201, aspartate 203, and glutamate 204. Position 201 is an N6-carboxylysine (lysine 201). The Proton acceptor role is filled by histidine 294. Arginine 295, histidine 327, and serine 379 together coordinate substrate.

Belongs to the RuBisCO large chain family. Type I subfamily. As to quaternary structure, heterohexadecamer of 8 large chains and 8 small chains; disulfide-linked. The disulfide link is formed within the large subunit homodimers. Mg(2+) is required as a cofactor. Post-translationally, the disulfide bond which can form in the large chain dimeric partners within the hexadecamer appears to be associated with oxidative stress and protein turnover.

It is found in the plastid. The protein localises to the chloroplast. The catalysed reaction is 2 (2R)-3-phosphoglycerate + 2 H(+) = D-ribulose 1,5-bisphosphate + CO2 + H2O. It catalyses the reaction D-ribulose 1,5-bisphosphate + O2 = 2-phosphoglycolate + (2R)-3-phosphoglycerate + 2 H(+). In terms of biological role, ruBisCO catalyzes two reactions: the carboxylation of D-ribulose 1,5-bisphosphate, the primary event in carbon dioxide fixation, as well as the oxidative fragmentation of the pentose substrate in the photorespiration process. Both reactions occur simultaneously and in competition at the same active site. The polypeptide is Ribulose bisphosphate carboxylase large chain (Lotus japonicus (Lotus corniculatus var. japonicus)).